The sequence spans 186 residues: Ribosome-recycling factor (186 aa).

The protein belongs to the RRF family.

It localises to the cytoplasm. Its function is as follows. Responsible for the release of ribosomes from messenger RNA at the termination of protein biosynthesis. May increase the efficiency of translation by recycling ribosomes from one round of translation to another. In Chlorobium phaeovibrioides (strain DSM 265 / 1930) (Prosthecochloris vibrioformis (strain DSM 265)), this protein is Ribosome-recycling factor.